Reading from the N-terminus, the 144-residue chain is Methylglyoxal synthase (144 aa).

In terms of domain architecture, MGS-like spans 1–144 (MNIALIAHDE…EEEQRKFLTD (144 aa)). Substrate is bound by residues histidine 8, lysine 12, 34–37 (TGTT), and 54–55 (SG). Residue aspartate 60 is the Proton donor/acceptor of the active site. Histidine 87 is a binding site for substrate.

This sequence belongs to the methylglyoxal synthase family.

The catalysed reaction is dihydroxyacetone phosphate = methylglyoxal + phosphate. Its function is as follows. Catalyzes the formation of methylglyoxal from dihydroxyacetone phosphate. The sequence is that of Methylglyoxal synthase from Exiguobacterium sibiricum (strain DSM 17290 / CCUG 55495 / CIP 109462 / JCM 13490 / 255-15).